We begin with the raw amino-acid sequence, 595 residues long: GRB2-associated-binding protein 3 (595 aa).

The PH domain occupies Asp5–Asn117. The tract at residues Ser295–Thr339 is disordered. Over residues Leu317–Ser331 the composition is skewed to polar residues. Position 346 is a phosphoserine (Ser346). Disordered stretches follow at residues Pro389–Arg408 and Pro418–Thr463. A compositionally biased stretch (polar residues) spans Arg454–Thr463. Ser480 carries the post-translational modification Phosphoserine. Residues Ser493–Glu513 form a disordered region. Over residues Ser496–Glu513 the composition is skewed to acidic residues.

It belongs to the GAB family. Interacts with PIK3R/p85, SHP2 and GRAP2/MONA. May interact with Grb2. Post-translationally, phosphorylated on tyrosine residue(s) after macrophage colony-stimulating factor (M-CSF) receptor stimulation. As to expression, highly expressed in spleen and thymus and weakly in brain, heart, lung, kidney, uterus, and embryonic stem cells. Also expressed in myeloid and macrophage cell lines.

This is GRB2-associated-binding protein 3 (Gab3) from Mus musculus (Mouse).